The primary structure comprises 84 residues: Small ribosomal subunit protein uS15 (84 aa).

The protein belongs to the universal ribosomal protein uS15 family. In terms of assembly, part of the 30S ribosomal subunit. Forms a bridge to the 50S subunit in the 70S ribosome, contacting the 23S rRNA.

Its function is as follows. One of the primary rRNA binding proteins, it binds directly to 16S rRNA where it helps nucleate assembly of the platform of the 30S subunit by binding and bridging several RNA helices of the 16S rRNA. In terms of biological role, forms an intersubunit bridge (bridge B4) with the 23S rRNA of the 50S subunit in the ribosome. This Akkermansia muciniphila (strain ATCC BAA-835 / DSM 22959 / JCM 33894 / BCRC 81048 / CCUG 64013 / CIP 107961 / Muc) protein is Small ribosomal subunit protein uS15.